The sequence spans 845 residues: Ribosome-releasing factor 2, mitochondrial (845 aa).

A mitochondrion-targeting transit peptide spans 1–28 (MIIATSLRSQTFCTWRAWRAVHSTAVRL). One can recognise a tr-type G domain in the interval 38–330 (DRTRNIGIIA…GVVKYLPSPL (293 aa)). Residues 47 to 54 (AHIDAGKT), 111 to 115 (DTPGH), and 165 to 168 (NKMD) contribute to the GTP site.

The protein belongs to the TRAFAC class translation factor GTPase superfamily. Classic translation factor GTPase family. EF-G/EF-2 subfamily.

It localises to the mitochondrion. Mitochondrial GTPase that mediates the disassembly of ribosomes from messenger RNA at the termination of mitochondrial protein biosynthesis. Not involved in the GTP-dependent ribosomal translocation step during translation elongation. The sequence is that of Ribosome-releasing factor 2, mitochondrial from Scheffersomyces stipitis (strain ATCC 58785 / CBS 6054 / NBRC 10063 / NRRL Y-11545) (Yeast).